We begin with the raw amino-acid sequence, 279 residues long: Tryptophan 2,3-dioxygenase (279 aa).

Residues 48 to 52 (FIIQH), Tyr-110, and Arg-114 each bind substrate. His-237 contributes to the heme binding site. A substrate-binding site is contributed by Thr-251.

Belongs to the tryptophan 2,3-dioxygenase family. In terms of assembly, homotetramer. Requires heme as cofactor.

The enzyme catalyses L-tryptophan + O2 = N-formyl-L-kynurenine. The protein operates within amino-acid degradation; L-tryptophan degradation via kynurenine pathway; L-kynurenine from L-tryptophan: step 1/2. Its function is as follows. Heme-dependent dioxygenase that catalyzes the oxidative cleavage of the L-tryptophan (L-Trp) pyrrole ring and converts L-tryptophan to N-formyl-L-kynurenine. Catalyzes the oxidative cleavage of the indole moiety. This chain is Tryptophan 2,3-dioxygenase, found in Bradyrhizobium sp. (strain ORS 278).